Reading from the N-terminus, the 179-residue chain is Large ribosomal subunit protein uL6 (179 aa).

The protein belongs to the universal ribosomal protein uL6 family. Part of the 50S ribosomal subunit.

Functionally, this protein binds to the 23S rRNA, and is important in its secondary structure. It is located near the subunit interface in the base of the L7/L12 stalk, and near the tRNA binding site of the peptidyltransferase center. In Acidobacterium capsulatum (strain ATCC 51196 / DSM 11244 / BCRC 80197 / JCM 7670 / NBRC 15755 / NCIMB 13165 / 161), this protein is Large ribosomal subunit protein uL6.